The chain runs to 321 residues: MTDAGSWCLIESDPGVFTEMLRGFGVDGLQVEELYSLDDDKAMTRPTYGLIFLFKWRQGDETTGIPSDKQNIFFAHQTIQNACATQALINLLMNVEDTDVKLGNILNQYKEFAIDLDPNTRGHCLSNSEEIRTVHNSFSRQTLFELDIKGGESEDNYHFVTYVPIGNKVYELDGLRELPLEVAEFQKEQDWIEAIKPVIQQRMQKYSEGEITFNLMALVPNRKQKLQEMMENLIQANENNELEEQIADLNKAIADEDYKMEMYRKENNRRRHNYTPFVIELMKILAKEGKLVGLVDNAYQAAKEKSKLNTDITKLELKRKQ.

The region spanning S6–P220 is the UCH catalytic domain. Catalysis depends on C83, which acts as the Nucleophile. H158 acts as the Proton donor in catalysis. In terms of domain architecture, ULD spans N273–A301.

The protein belongs to the peptidase C12 family. Interacts with proteasome 19S subunit rpn-13. As to expression, highly expressed in intestine and to a lesser extent in other tissues including muscles and neurons.

The catalysed reaction is Thiol-dependent hydrolysis of ester, thioester, amide, peptide and isopeptide bonds formed by the C-terminal Gly of ubiquitin (a 76-residue protein attached to proteins as an intracellular targeting signal).. Its function is as follows. Ubiquitin-protein hydrolase involved both in the processing of ubiquitin precursors and of ubiquitinated proteins. This enzyme is a thiol protease that recognizes and hydrolyzes a peptide bond at the C-terminal glycine of ubiquitin. The sequence is that of Ubiquitin carboxyl-terminal hydrolase ubh-4 from Caenorhabditis elegans.